The sequence spans 533 residues: Flavin-containing monooxygenase 5 (533 aa).

R5 is subject to Dimethylated arginine. Residues 10–14, E33, and 41–42 contribute to the FAD site; these read GGGVS and LW. The residue at position 54 (S54) is a Phosphoserine. Y56 is subject to Phosphotyrosine. The residue at position 58 (S58) is a Phosphoserine. Residue 62 to 63 coordinates FAD; the sequence is NT. Residue 196–199 coordinates NADP(+); sequence SGGD. S280 is subject to Phosphoserine. Phosphothreonine is present on T284. The residue at position 401 (S401) is a Phosphoserine. The helical transmembrane segment at 510–530 threads the bilayer; that stretch reads MVSAVTTGCFMLAVVFFAIIM.

Belongs to the FMO family. FAD is required as a cofactor. As to expression, expressed in liver.

The protein resides in the microsome membrane. The protein localises to the endoplasmic reticulum membrane. It carries out the reaction N,N-dimethylaniline + NADPH + O2 + H(+) = N,N-dimethylaniline N-oxide + NADP(+) + H2O. The enzyme catalyses NADPH + O2 + H(+) = H2O2 + NADP(+). It catalyses the reaction heptan-2-one + NADPH + O2 + H(+) = pentyl acetate + NADP(+) + H2O. The catalysed reaction is octan-3-one + NADPH + O2 + H(+) = pentyl propanoate + NADP(+) + H2O. It carries out the reaction octan-3-one + NADPH + O2 + H(+) = ethyl hexanoate + NADP(+) + H2O. The enzyme catalyses hexan-3-one + NADPH + O2 + H(+) = ethyl butanoate + NADP(+) + H2O. It catalyses the reaction hexan-3-one + NADPH + O2 + H(+) = propyl propanoate + NADP(+) + H2O. The catalysed reaction is heptan-4-one + NADPH + O2 + H(+) = propyl butanoate + NADP(+) + H2O. It carries out the reaction (2E)-geranial + NADPH + O2 + H(+) = (1E)-2,6-dimethylhepta-1,5-dien-1-yl formate + NADP(+) + H2O. The enzyme catalyses sulcatone + NADPH + O2 + H(+) = 4-methylpent-3-en-1-yl acetate + NADP(+) + H2O. Functionally, acts as a Baeyer-Villiger monooxygenase on a broad range of substrates. Catalyzes the insertion of an oxygen atom into a carbon-carbon bond adjacent to a carbonyl, which converts ketones to esters. Active on diverse carbonyl compounds, whereas soft nucleophiles are mostly non- or poorly reactive. In contrast with other forms of FMO it is non- or poorly active on 'classical' substrates such as drugs, pesticides, and dietary components containing soft nucleophilic heteroatoms. Able to oxidize drug molecules bearing a carbonyl group on an aliphatic chain, such as nabumetone and pentoxifylline. Also, in the absence of substrates, shows slow but yet significant NADPH oxidase activity. Acts as a positive modulator of cholesterol biosynthesis as well as glucose homeostasis, promoting metabolic aging via pleiotropic effects. The protein is Flavin-containing monooxygenase 5 (FMO5) of Cavia porcellus (Guinea pig).